The sequence spans 88 residues: Large ribosomal subunit protein bL27 (88 aa).

The interval 1 to 21 is disordered; it reads MAHKKGVGSSRNGRDSQPKML.

This sequence belongs to the bacterial ribosomal protein bL27 family.

The chain is Large ribosomal subunit protein bL27 from Pelotomaculum thermopropionicum (strain DSM 13744 / JCM 10971 / SI).